We begin with the raw amino-acid sequence, 240 residues long: Large ribosomal subunit protein uL2 (240 aa).

Residues Met-1–Arg-10 are compositionally biased toward polar residues. 2 disordered regions span residues Met-1–Pro-20 and Phe-204–Arg-240.

Belongs to the universal ribosomal protein uL2 family. In terms of assembly, part of the 50S ribosomal subunit. Forms a bridge to the 30S subunit in the 70S ribosome.

One of the primary rRNA binding proteins. Required for association of the 30S and 50S subunits to form the 70S ribosome, for tRNA binding and peptide bond formation. It has been suggested to have peptidyltransferase activity; this is somewhat controversial. Makes several contacts with the 16S rRNA in the 70S ribosome. The sequence is that of Large ribosomal subunit protein uL2 from Methanocorpusculum labreanum (strain ATCC 43576 / DSM 4855 / Z).